The primary structure comprises 178 residues: 2-C-methyl-D-erythritol 2,4-cyclodiphosphate synthase (178 aa).

The a divalent metal cation site is built by Asp-24, His-26, and His-61. 24-26 (DSH) contacts 4-CDP-2-C-methyl-D-erythritol 2-phosphate. Residue 150-153 (TSGE) participates in 4-CDP-2-C-methyl-D-erythritol 2-phosphate binding.

It belongs to the IspF family. Homotrimer. A divalent metal cation serves as cofactor.

It carries out the reaction 4-CDP-2-C-methyl-D-erythritol 2-phosphate = 2-C-methyl-D-erythritol 2,4-cyclic diphosphate + CMP. The protein operates within isoprenoid biosynthesis; isopentenyl diphosphate biosynthesis via DXP pathway; isopentenyl diphosphate from 1-deoxy-D-xylulose 5-phosphate: step 4/6. In terms of biological role, involved in the biosynthesis of isopentenyl diphosphate (IPP) and dimethylallyl diphosphate (DMAPP), two major building blocks of isoprenoid compounds. Catalyzes the conversion of 4-diphosphocytidyl-2-C-methyl-D-erythritol 2-phosphate (CDP-ME2P) to 2-C-methyl-D-erythritol 2,4-cyclodiphosphate (ME-CPP) with a corresponding release of cytidine 5-monophosphate (CMP). This is 2-C-methyl-D-erythritol 2,4-cyclodiphosphate synthase from Chlamydia trachomatis serovar L2b (strain UCH-1/proctitis).